The sequence spans 419 residues: MTTPLLQDLQDRGLIAQASDLEEIQTLLSQPQTVYCGFDPTAGSLHIGHLVPLIMLKRFQDAGHQAVALIGGATGMIGDPSFKATERSLNSAEIVSGWVNDLSNQIQQLMNHQLSKPMIMVNNADWMRAINVIDFFRDVGKHFSINTMINRESVKQRLQRPDQGISFTEFSYALLQSYDFAELNRQYGCRLQIGGNDQWGNIVSGIDLTRRQNGEQVFGLTLPLITKSDGTKFGKTEGGAVWLDPSKTSPYAFYQFWLGAEDADVYHFLRYYTFLSCEEIASIEAQDQASQGKPQAQRILAEEMTRFVHGEEGLASAERITQALFSGNVQQLSLGELKQLELDGLPSIESAQQDLVELLIESGLASSKRVAREHISNNAISVNGEKVSADNPSLSFPLFDQYWLLQRGKKHFCLVKRAA.

Y35 is a binding site for L-tyrosine. Positions 40 to 49 match the 'HIGH' region motif; that stretch reads PTAGSLHIGH. Residues Y172 and Q176 each contribute to the L-tyrosine site. Residues 232 to 236 carry the 'KMSKS' region motif; sequence KFGKT. K235 lines the ATP pocket. The 66-residue stretch at 353–418 folds into the S4 RNA-binding domain; that stretch reads QDLVELLIES…KKHFCLVKRA (66 aa).

It belongs to the class-I aminoacyl-tRNA synthetase family. TyrS type 1 subfamily. In terms of assembly, homodimer.

Its subcellular location is the cytoplasm. It catalyses the reaction tRNA(Tyr) + L-tyrosine + ATP = L-tyrosyl-tRNA(Tyr) + AMP + diphosphate + H(+). Functionally, catalyzes the attachment of tyrosine to tRNA(Tyr) in a two-step reaction: tyrosine is first activated by ATP to form Tyr-AMP and then transferred to the acceptor end of tRNA(Tyr). The protein is Tyrosine--tRNA ligase 1 of Vibrio parahaemolyticus serotype O3:K6 (strain RIMD 2210633).